The following is a 426-amino-acid chain: Formate-dependent phosphoribosylglycinamide formyltransferase (426 aa).

Residues Glu-26 to Leu-27 and Glu-86 contribute to the N(1)-(5-phospho-beta-D-ribosyl)glycinamide site. ATP is bound by residues Arg-118, Lys-158, Glu-197 to Ile-200, and Glu-205. An ATP-grasp domain is found at Glu-123–Leu-324. Glu-279 and Glu-293 together coordinate Mg(2+). N(1)-(5-phospho-beta-D-ribosyl)glycinamide contacts are provided by residues Asp-300, Lys-374, and Arg-381–Arg-382.

The protein belongs to the PurK/PurT family. In terms of assembly, homodimer.

It catalyses the reaction N(1)-(5-phospho-beta-D-ribosyl)glycinamide + formate + ATP = N(2)-formyl-N(1)-(5-phospho-beta-D-ribosyl)glycinamide + ADP + phosphate + H(+). Its pathway is purine metabolism; IMP biosynthesis via de novo pathway; N(2)-formyl-N(1)-(5-phospho-D-ribosyl)glycinamide from N(1)-(5-phospho-D-ribosyl)glycinamide (formate route): step 1/1. Functionally, involved in the de novo purine biosynthesis. Catalyzes the transfer of formate to 5-phospho-ribosyl-glycinamide (GAR), producing 5-phospho-ribosyl-N-formylglycinamide (FGAR). Formate is provided by PurU via hydrolysis of 10-formyl-tetrahydrofolate. The protein is Formate-dependent phosphoribosylglycinamide formyltransferase of Methanocella arvoryzae (strain DSM 22066 / NBRC 105507 / MRE50).